Consider the following 349-residue polypeptide: Large ribosomal subunit protein uL2mz, N-terminal part (349 aa).

This sequence belongs to the universal ribosomal protein uL2 family. Component of the mitochondrial ribosome large subunit.

The protein resides in the mitochondrion. This Arabidopsis thaliana (Mouse-ear cress) protein is Large ribosomal subunit protein uL2mz, N-terminal part.